Reading from the N-terminus, the 64-residue chain is Prokaryotic ubiquitin-like protein Pup (64 aa).

Residues M1–D37 form a disordered region. The tract at residues G21–Y58 is ARC ATPase binding. Residues A24–E52 are a coiled coil. Q64 bears the Deamidated glutamine mark. Q64 participates in a covalent cross-link: Isoglutamyl lysine isopeptide (Gln-Lys) (interchain with K-? in acceptor proteins).

The protein belongs to the prokaryotic ubiquitin-like protein family. As to quaternary structure, strongly interacts with the proteasome-associated ATPase ARC through a hydrophobic interface; the interacting region of Pup lies in its C-terminal half. There is one Pup binding site per ARC hexamer ring. In terms of processing, is modified by deamidation of its C-terminal glutamine to glutamate by the deamidase Dop, a prerequisite to the subsequent pupylation process.

Its pathway is protein degradation; proteasomal Pup-dependent pathway. Protein modifier that is covalently attached to lysine residues of substrate proteins, thereby targeting them for proteasomal degradation. The tagging system is termed pupylation. In Mycobacterium sp. (strain JLS), this protein is Prokaryotic ubiquitin-like protein Pup.